A 456-amino-acid polypeptide reads, in one-letter code: Adenylosuccinate lyase (456 aa).

Residues 15–16, 90–92, and 122–123 each bind N(6)-(1,2-dicarboxyethyl)-AMP; these read RY, NHD, and TS. Residue His-171 is the Proton donor/acceptor of the active site. Residue Gln-247 participates in N(6)-(1,2-dicarboxyethyl)-AMP binding. Ser-295 acts as the Proton donor/acceptor in catalysis. Residues Ser-296, 301 to 303, Asn-309, Arg-335, and 340 to 344 contribute to the N(6)-(1,2-dicarboxyethyl)-AMP site; these read KVN and STVLR.

This sequence belongs to the lyase 1 family. Adenylosuccinate lyase subfamily. As to quaternary structure, homotetramer. Residues from neighboring subunits contribute catalytic and substrate-binding residues to each active site.

It carries out the reaction N(6)-(1,2-dicarboxyethyl)-AMP = fumarate + AMP. The enzyme catalyses (2S)-2-[5-amino-1-(5-phospho-beta-D-ribosyl)imidazole-4-carboxamido]succinate = 5-amino-1-(5-phospho-beta-D-ribosyl)imidazole-4-carboxamide + fumarate. It participates in purine metabolism; AMP biosynthesis via de novo pathway; AMP from IMP: step 2/2. The protein operates within purine metabolism; IMP biosynthesis via de novo pathway; 5-amino-1-(5-phospho-D-ribosyl)imidazole-4-carboxamide from 5-amino-1-(5-phospho-D-ribosyl)imidazole-4-carboxylate: step 2/2. Catalyzes two reactions in de novo purine nucleotide biosynthesis. Catalyzes the breakdown of 5-aminoimidazole- (N-succinylocarboxamide) ribotide (SAICAR or 2-[5-amino-1-(5-phospho-beta-D-ribosyl)imidazole-4-carboxamido]succinate) to 5-aminoimidazole-4-carboxamide ribotide (AICAR or 5-amino-1-(5-phospho-beta-D-ribosyl)imidazole-4-carboxamide) and fumarate, and of adenylosuccinate (ADS or N(6)-(1,2-dicarboxyethyl)-AMP) to adenosine monophosphate (AMP) and fumarate. This is Adenylosuccinate lyase (purB) from Legionella pneumophila (strain Corby).